The sequence spans 270 residues: Tubulin-specific chaperone B (270 aa).

In terms of domain architecture, CAP-Gly spans 214–256 (GTVEFSSGVWIGVELDLPLGKNDGSVKGKQYFQCSPKYGCFAK).

The protein belongs to the TBCB family. Supercomplex made of cofactors A to E. Cofactors A and D function by capturing and stabilizing tubulin in a quasi-native conformation. Cofactor E binds to the cofactor D-tubulin complex; interaction with cofactor C then causes the release of tubulin polypeptides that are committed to the native state.

The protein localises to the cytoplasm. The protein resides in the cytoskeleton. Binds to alpha-tubulin folding intermediates after their interaction with cytosolic chaperonin in the pathway leading from newly synthesized tubulin to properly folded heterodimer. This is Tubulin-specific chaperone B (tbcb) from Dictyostelium discoideum (Social amoeba).